The following is a 379-amino-acid chain: Alcohol dehydrogenase class-2 isozyme 1 (379 aa).

Zn(2+) is bound by residues cysteine 47, histidine 69, cysteine 99, cysteine 102, cysteine 105, cysteine 113, and cysteine 176. NAD(+) is bound by residues 205–210 (GLGGVG), aspartate 229, lysine 234, 298–300 (VGV), and arginine 374.

The protein belongs to the zinc-containing alcohol dehydrogenase family. Class-II subfamily. Homodimer. Zn(2+) is required as a cofactor.

It is found in the cytoplasm. It carries out the reaction a primary alcohol + NAD(+) = an aldehyde + NADH + H(+). The enzyme catalyses a secondary alcohol + NAD(+) = a ketone + NADH + H(+). The polypeptide is Alcohol dehydrogenase class-2 isozyme 1 (ADH2-1) (Oryctolagus cuniculus (Rabbit)).